A 149-amino-acid chain; its full sequence is Transcriptional repressor NrdR (149 aa).

A zinc finger spans residues 3–34; sequence CPFCFAVDTKVIDSRLVGEGSSVRRRRQCLVC. The ATP-cone domain occupies 49–139; sequence PRVVKSNDVR…VYRSFEDIKE (91 aa).

It belongs to the NrdR family. It depends on Zn(2+) as a cofactor.

Functionally, negatively regulates transcription of bacterial ribonucleotide reductase nrd genes and operons by binding to NrdR-boxes. The chain is Transcriptional repressor NrdR from Klebsiella pneumoniae (strain 342).